The sequence spans 565 residues: DNA mismatch repair protein MutL (565 aa).

Belongs to the DNA mismatch repair MutL/HexB family.

Its function is as follows. This protein is involved in the repair of mismatches in DNA. It is required for dam-dependent methyl-directed DNA mismatch repair. May act as a 'molecular matchmaker', a protein that promotes the formation of a stable complex between two or more DNA-binding proteins in an ATP-dependent manner without itself being part of a final effector complex. This Desulforudis audaxviator (strain MP104C) protein is DNA mismatch repair protein MutL.